Consider the following 252-residue polypeptide: Bidirectional sugar transporter SWEET3b (252 aa).

The Extracellular portion of the chain corresponds to 1-8 (MVSNTIRV). Residues 9-29 (AVGILGNAASMLLYAAPILTF) form a helical membrane-spanning segment. In terms of domain architecture, MtN3/slv 1 spans 10–98 (VGILGNAASM…SIYTWFAPRE (89 aa)). Over 30 to 43 (RRVIKKGSVEEFSC) the chain is Cytoplasmic. A helical transmembrane segment spans residues 44–64 (VPYILALFNCLLYTWYGLPVV). Over 65 to 75 (SSGWENSTVSS) the chain is Extracellular. Asn70 carries an N-linked (GlcNAc...) asparagine glycan. A helical transmembrane segment spans residues 76–96 (INGLGILLEIAFISIYTWFAP). The Cytoplasmic portion of the chain corresponds to 97–105 (RERKKFVLR). Residues 106–126 (MVLPVLAFFALTAIFSSFLFH) form a helical membrane-spanning segment. The Extracellular portion of the chain corresponds to 127–132 (THGLRK). A helical membrane pass occupies residues 133 to 153 (VFVGSIGLVASISMYSSPMVA). The MtN3/slv 2 domain occupies 134–219 (FVGSIGLVAS…LYCIYRKSHK (86 aa)). The Cytoplasmic segment spans residues 154–167 (AKQVITTKSVEFMP). The chain crosses the membrane as a helical span at residues 168 to 188 (FYLSLFSFLSSALWMIYGLLG). At 189 to 190 (KD) the chain is on the extracellular side. The chain crosses the membrane as a helical span at residues 191–211 (LFIASPNFIGCPMGILQLVLY). Residues 212–252 (CIYRKSHKEAEKLHDIDQENGLKVVTTHEKITGREPEAQRD) lie on the Cytoplasmic side of the membrane.

Belongs to the SWEET sugar transporter family. Forms homooligomers and/or heterooligomers.

The protein localises to the cell membrane. In terms of biological role, mediates both low-affinity uptake and efflux of sugar across the plasma membrane. This Oryza sativa subsp. japonica (Rice) protein is Bidirectional sugar transporter SWEET3b (SWEET3B).